The following is a 315-amino-acid chain: tRNA dimethylallyltransferase (315 aa).

9-16 (GPTASGKT) lines the ATP pocket. 11 to 16 (TASGKT) is a substrate binding site. 2 interaction with substrate tRNA regions span residues 34 to 37 (DSLL) and 158 to 162 (QRIQR).

The protein belongs to the IPP transferase family. As to quaternary structure, monomer. The cofactor is Mg(2+).

The catalysed reaction is adenosine(37) in tRNA + dimethylallyl diphosphate = N(6)-dimethylallyladenosine(37) in tRNA + diphosphate. Functionally, catalyzes the transfer of a dimethylallyl group onto the adenine at position 37 in tRNAs that read codons beginning with uridine, leading to the formation of N6-(dimethylallyl)adenosine (i(6)A). The polypeptide is tRNA dimethylallyltransferase (Acidithiobacillus ferrooxidans (strain ATCC 53993 / BNL-5-31) (Leptospirillum ferrooxidans (ATCC 53993))).